A 474-amino-acid chain; its full sequence is Mitogen-activated protein kinase pmk-3 (474 aa).

Over residues 1–13 the composition is skewed to low complexity; it reads MASVPSSSSLPVS. Positions 1 to 90 are disordered; it reads MASVPSSSSL…EEEEDILSKP (90 aa). Positions 30-48 are enriched in polar residues; it reads KRSNNQSQPPESYEPNTWL. Residues 52–69 are compositionally biased toward basic and acidic residues; the sequence is REQEQQKKLAAENIKKQS. The Protein kinase domain occupies 114–419; the sequence is YDVEPNSIEY…VEEAIQHPYL (306 aa). Residues 124 to 132 and lysine 150 each bind ATP; that span reads LGGGSFGNV. The active-site Proton acceptor is the aspartate 252. Threonine 285 carries the post-translational modification Phosphothreonine. The TXY motif lies at 285–287; sequence TQY. A Phosphotyrosine modification is found at tyrosine 287.

It belongs to the protein kinase superfamily. CMGC Ser/Thr protein kinase family. MAP kinase subfamily. Interacts with mak-2. May interact with vhp-1. May interact with uev-3. The cofactor is Mg(2+). In terms of processing, dually phosphorylated on Thr-285 and Tyr-287, which activates the enzyme. Expressed throughout the intestine.

It localises to the nucleus. The protein resides in the cytoplasm. Its subcellular location is the cell projection. It is found in the axon. The protein localises to the dendrite. It localises to the cilium. The enzyme catalyses L-seryl-[protein] + ATP = O-phospho-L-seryl-[protein] + ADP + H(+). It carries out the reaction L-threonyl-[protein] + ATP = O-phospho-L-threonyl-[protein] + ADP + H(+). Activated by phosphorylation on threonine and tyrosine. Functionally, responds to activation by environmental stress and pro-inflammatory cytokines by phosphorylating downstream targets. Involved in axon regeneration after injury, probably downstream of dlk-1 and mkk-4 and upstream of mak-2. May phosphorylate mak-2. Plays a role in cilium length regulation, possibly by reducing rab-5 mediated endocytosis. Plays a role in the formation of muscle connections, also called muscle arm extensions, between the body wall and the motor axons in the dorsal and ventral cord. The sequence is that of Mitogen-activated protein kinase pmk-3 (pmk-3) from Caenorhabditis elegans.